An 88-amino-acid chain; its full sequence is Putative membrane protein insertion efficiency factor (88 aa).

Belongs to the UPF0161 family.

Its subcellular location is the cell inner membrane. Could be involved in insertion of integral membrane proteins into the membrane. The polypeptide is Putative membrane protein insertion efficiency factor (Koribacter versatilis (strain Ellin345)).